The primary structure comprises 643 residues: tRNA 5-methylaminomethyl-2-thiouridine biosynthesis bifunctional protein MnmC (643 aa).

The tRNA (mnm(5)s(2)U34)-methyltransferase stretch occupies residues 1–223; that stretch reads MPDRLVSATL…VDDRLVGDYA (223 aa). The FAD-dependent cmnm(5)s(2)U34 oxidoreductase stretch occupies residues 247-643; it reads IGAGLAGCAV…LRARRVGSAG (397 aa).

The protein in the N-terminal section; belongs to the methyltransferase superfamily. tRNA (mnm(5)s(2)U34)-methyltransferase family. In the C-terminal section; belongs to the DAO family. FAD serves as cofactor.

The protein resides in the cytoplasm. It carries out the reaction 5-aminomethyl-2-thiouridine(34) in tRNA + S-adenosyl-L-methionine = 5-methylaminomethyl-2-thiouridine(34) in tRNA + S-adenosyl-L-homocysteine + H(+). Catalyzes the last two steps in the biosynthesis of 5-methylaminomethyl-2-thiouridine (mnm(5)s(2)U) at the wobble position (U34) in tRNA. Catalyzes the FAD-dependent demodification of cmnm(5)s(2)U34 to nm(5)s(2)U34, followed by the transfer of a methyl group from S-adenosyl-L-methionine to nm(5)s(2)U34, to form mnm(5)s(2)U34. The protein is tRNA 5-methylaminomethyl-2-thiouridine biosynthesis bifunctional protein MnmC of Burkholderia orbicola (strain MC0-3).